A 169-amino-acid chain; its full sequence is Protein GrpE (169 aa).

The disordered stretch occupies residues 1–25 (MSEEKQNGQIQEETVENSENQNNEL). The span at 7–23 (NGQIQEETVENSENQNN) shows a compositional bias: polar residues.

It belongs to the GrpE family. As to quaternary structure, homodimer.

It localises to the cytoplasm. Its function is as follows. Participates actively in the response to hyperosmotic and heat shock by preventing the aggregation of stress-denatured proteins, in association with DnaK and GrpE. It is the nucleotide exchange factor for DnaK and may function as a thermosensor. Unfolded proteins bind initially to DnaJ; upon interaction with the DnaJ-bound protein, DnaK hydrolyzes its bound ATP, resulting in the formation of a stable complex. GrpE releases ADP from DnaK; ATP binding to DnaK triggers the release of the substrate protein, thus completing the reaction cycle. Several rounds of ATP-dependent interactions between DnaJ, DnaK and GrpE are required for fully efficient folding. The polypeptide is Protein GrpE (Campylobacter lari (strain RM2100 / D67 / ATCC BAA-1060)).